The primary structure comprises 1042 residues: FHIP family protein AAEL005291 (1042 aa).

Residues 1-14 show a composition bias toward polar residues; that stretch reads MSWLRSSPLRQSFS. Disordered regions lie at residues 1-31, 494-514, 821-866, and 905-977; these read MSWL…GGNS, NNTS…PQGG, PHSG…KRND, and SNSS…GSPH. Polar residues predominate over residues 839–859; sequence VSMTSNLSQTTPMQLTPSSSY. Low complexity-rich tracts occupy residues 905-940 and 956-976; these read SNSS…FMGS and PSIG…TGSP.

This sequence belongs to the FHIP family.

The chain is FHIP family protein AAEL005291 from Aedes aegypti (Yellowfever mosquito).